The following is a 338-amino-acid chain: Nicotinate-nucleotide--dimethylbenzimidazole phosphoribosyltransferase (338 aa).

E306 (proton acceptor) is an active-site residue.

This sequence belongs to the CobT family.

The catalysed reaction is 5,6-dimethylbenzimidazole + nicotinate beta-D-ribonucleotide = alpha-ribazole 5'-phosphate + nicotinate + H(+). The protein operates within nucleoside biosynthesis; alpha-ribazole biosynthesis; alpha-ribazole from 5,6-dimethylbenzimidazole: step 1/2. In terms of biological role, catalyzes the synthesis of alpha-ribazole-5'-phosphate from nicotinate mononucleotide (NAMN) and 5,6-dimethylbenzimidazole (DMB). The protein is Nicotinate-nucleotide--dimethylbenzimidazole phosphoribosyltransferase of Cereibacter sphaeroides (strain ATCC 17025 / ATH 2.4.3) (Rhodobacter sphaeroides).